A 344-amino-acid chain; its full sequence is L-rhamnose-proton symporter (344 aa).

10 consecutive transmembrane segments (helical) span residues 4–24 (AIIL…CFYA), 38–58 (WSIG…YLLL), 68–88 (FSIA…IGNI), 101–121 (MGIG…TPIL), 137–157 (TLLG…AGLL), 175–195 (LILA…MDAA), 207–227 (INSL…GAII), 259–279 (ILFS…YAWG), 290–310 (MSWM…GLLL), and 321–341 (VAVL…VGLG).

Belongs to the L-rhamnose transporter (TC 2.A.7.6) family.

Its subcellular location is the cell inner membrane. It carries out the reaction L-rhamnopyranose(in) + H(+)(in) = L-rhamnopyranose(out) + H(+)(out). Functionally, uptake of L-rhamnose across the cytoplasmic membrane with the concomitant transport of protons into the cell (symport system). In Yersinia pseudotuberculosis serotype O:1b (strain IP 31758), this protein is L-rhamnose-proton symporter.